A 433-amino-acid polypeptide reads, in one-letter code: uncharacterized protein (433 aa).

Positions 1 to 28 (MKICGLEKFRVFLSLISMVSLLCNGVNG) are cleaved as a signal peptide. The Extracellular portion of the chain corresponds to 29 to 274 (FTIVRSMAVN…QAELEPKKTG (246 aa)). The segment covering 235–250 (GENANPTANSGTSARS) has biased composition (polar residues). The tract at residues 235-266 (GENANPTANSGTSARSNRNEQNKMEEPARNQA) is disordered. The segment covering 251-266 (NRNEQNKMEEPARNQA) has biased composition (basic and acidic residues). Residues 275-295 (VVVAGVTVSLAAGFVLALATL) traverse the membrane as a helical segment. At 296–433 (LLMKKKQTSL…HDKGTDEDKG (138 aa)) the chain is on the cytoplasmic side. Disordered regions lie at residues 320 to 340 (EEPVDSAGRPEQTATESPSFD) and 413 to 433 (KVIEKTSNENSHDKGTDEDKG).

In terms of tissue distribution, component of the acid-insoluble and acid-soluble organic matrix of the aragonitic skeleton (at protein level).

It is found in the membrane. This is an uncharacterized protein from Acropora millepora (Staghorn coral).